Reading from the N-terminus, the 179-residue chain is Replication restart protein DnaT (179 aa).

The interval 156–179 (GGLPKRDVNTVSEPDSQIPPGFRG) is disordered.

It belongs to the DnaT family. As to quaternary structure, homooligomerizes. Interacts with PriB. Component of the replication restart primosome. Primosome assembly occurs via a 'hand-off' mechanism. PriA binds to replication forks, subsequently PriB then DnaT bind; DnaT then displaces ssDNA to generate the helicase loading substrate.

Its function is as follows. Involved in the restart of stalled replication forks, which reloads the replicative helicase on sites other than the origin of replication. Can function in multiple replication restart pathways. Displaces ssDNA from a PriB-ssDNA complex. Probably forms a spiral filament on ssDNA. The protein is Replication restart protein DnaT of Shigella boydii serotype 18 (strain CDC 3083-94 / BS512).